The primary structure comprises 225 residues: N-(5'-phosphoribosyl)anthranilate isomerase (225 aa).

The protein belongs to the TrpF family.

The catalysed reaction is N-(5-phospho-beta-D-ribosyl)anthranilate = 1-(2-carboxyphenylamino)-1-deoxy-D-ribulose 5-phosphate. It functions in the pathway amino-acid biosynthesis; L-tryptophan biosynthesis; L-tryptophan from chorismate: step 3/5. This chain is N-(5'-phosphoribosyl)anthranilate isomerase, found in Nitrobacter hamburgensis (strain DSM 10229 / NCIMB 13809 / X14).